We begin with the raw amino-acid sequence, 185 residues long: Elongation factor P (185 aa).

This sequence belongs to the elongation factor P family.

The protein localises to the cytoplasm. It functions in the pathway protein biosynthesis; polypeptide chain elongation. Functionally, involved in peptide bond synthesis. Stimulates efficient translation and peptide-bond synthesis on native or reconstituted 70S ribosomes in vitro. Probably functions indirectly by altering the affinity of the ribosome for aminoacyl-tRNA, thus increasing their reactivity as acceptors for peptidyl transferase. The sequence is that of Elongation factor P from Syntrophomonas wolfei subsp. wolfei (strain DSM 2245B / Goettingen).